We begin with the raw amino-acid sequence, 432 residues long: Amino-acid acetyltransferase (432 aa).

Residues 286-432 (EVVREATIED…RNSKIFEKPL (147 aa)) form the N-acetyltransferase domain.

This sequence belongs to the acetyltransferase family. ArgA subfamily.

It is found in the cytoplasm. The enzyme catalyses L-glutamate + acetyl-CoA = N-acetyl-L-glutamate + CoA + H(+). It functions in the pathway amino-acid biosynthesis; L-arginine biosynthesis; N(2)-acetyl-L-ornithine from L-glutamate: step 1/4. This Pseudomonas putida (strain ATCC 47054 / DSM 6125 / CFBP 8728 / NCIMB 11950 / KT2440) protein is Amino-acid acetyltransferase (argA).